The primary structure comprises 284 residues: MEMO1 family protein SSO0066 (284 aa).

This sequence belongs to the MEMO1 family.

The sequence is that of MEMO1 family protein SSO0066 from Saccharolobus solfataricus (strain ATCC 35092 / DSM 1617 / JCM 11322 / P2) (Sulfolobus solfataricus).